Here is a 967-residue protein sequence, read N- to C-terminus: Kinesin-like protein KIF28P (967 aa).

Residues 7–355 form the Kinesin motor domain; it reads DSVKAVRVRP…LRYAERERKI (349 aa). 111 to 118 contributes to the ATP binding site; the sequence is GQTGSGKS. The FHA domain maps to 410 to 472; the sequence is APCPRPALSP…LQHLDRLILG (63 aa). Residues 822 to 851 are a coiled coil; sequence NQIPELYLKLLKLEQETEPLRNINRALREE.

It belongs to the TRAFAC class myosin-kinesin ATPase superfamily. Kinesin family.

It localises to the mitochondrion membrane. In terms of biological role, microtubule-dependent motor protein required for mitochondrion morphology and transport of mitochondria in neuronal cells. The sequence is that of Kinesin-like protein KIF28P (KIF28P) from Homo sapiens (Human).